A 198-amino-acid polypeptide reads, in one-letter code: Thymidylate kinase (198 aa).

10-17 contributes to the ATP binding site; the sequence is GLDGSGKT.

The protein belongs to the thymidylate kinase family.

The catalysed reaction is dTMP + ATP = dTDP + ADP. In terms of biological role, phosphorylation of dTMP to form dTDP in both de novo and salvage pathways of dTTP synthesis. The protein is Thymidylate kinase of Thermus thermophilus (strain ATCC BAA-163 / DSM 7039 / HB27).